The chain runs to 289 residues: Protoheme IX farnesyltransferase 2 (289 aa).

A run of 9 helical transmembrane segments spans residues Leu13 to Ser33, Ile37 to Phe57, Leu86 to Leu106, Val109 to Leu129, Ile137 to Gly157, Val159 to Trp179, Glu207 to Ile227, Val232 to Ala252, and Ala267 to Val287.

The protein belongs to the UbiA prenyltransferase family. Protoheme IX farnesyltransferase subfamily.

Its subcellular location is the cell membrane. The enzyme catalyses heme b + (2E,6E)-farnesyl diphosphate + H2O = Fe(II)-heme o + diphosphate. The protein operates within porphyrin-containing compound metabolism; heme O biosynthesis; heme O from protoheme: step 1/1. Converts heme B (protoheme IX) to heme O by substitution of the vinyl group on carbon 2 of heme B porphyrin ring with a hydroxyethyl farnesyl side group. The polypeptide is Protoheme IX farnesyltransferase 2 (Picrophilus torridus (strain ATCC 700027 / DSM 9790 / JCM 10055 / NBRC 100828 / KAW 2/3)).